The primary structure comprises 752 residues: Probable beta-glucosidase D (752 aa).

Positions 1–18 (MRFVSLAVGAALLGAAGA) are cleaved as a signal peptide. N-linked (GlcNAc...) asparagine glycans are attached at residues Asn187 and Asn237. The active site involves Asp265. N-linked (GlcNAc...) asparagine glycans are attached at residues Asn299, Asn343, Asn441, Asn510, Asn532, Asn571, Asn586, Asn638, Asn661, and Asn743.

It belongs to the glycosyl hydrolase 3 family.

Its subcellular location is the secreted. It catalyses the reaction Hydrolysis of terminal, non-reducing beta-D-glucosyl residues with release of beta-D-glucose.. It functions in the pathway glycan metabolism; cellulose degradation. Beta-glucosidases are one of a number of cellulolytic enzymes involved in the degradation of cellulosic biomass. Catalyzes the last step releasing glucose from the inhibitory cellobiose. The polypeptide is Probable beta-glucosidase D (bglD) (Aspergillus flavus (strain ATCC 200026 / FGSC A1120 / IAM 13836 / NRRL 3357 / JCM 12722 / SRRC 167)).